We begin with the raw amino-acid sequence, 394 residues long: MSKEKFKRSKPHINVGTIGHVDHGKTTLTSAITTVLSKKYGGAACAFDQIDNAPEEKARGITINTSHVEYDTSIRHYAHVDCPGHADYIKNMITGAAQMDGAILVVAATDGPMPQTREHILLGRQVGVPYIVVFLNKCDMVDDEELLELVEMEVRDLLTQYDFPGDSTPIVRGSALKALEGDPQWEQKILDLSNYLDTYIPEPKRSIDQPFLLPIEDVFSISGRGTVVTGRIERGIIKVGEEVEIVGIKSTVKTICTGVEMFRKLLDEGRAGENVGVLLRGTKRDDIERGQVLAKPGTITPHIKFESEVYVLSKEEGGRHTPFFKGYRPQFYFRTTDVTGSVELPEDMEMVMPGDNVKMVITLIHPIAMSDGLRFAIREGGKTVGAGIVVKVLQ.

A tr-type G domain is found at 10 to 204 (KPHINVGTIG…YLDTYIPEPK (195 aa)). Residues 19–26 (GHVDHGKT) are G1. 19–26 (GHVDHGKT) provides a ligand contact to GTP. Threonine 26 is a Mg(2+) binding site. Residues 60–64 (GITIN) form a G2 region. The interval 81–84 (DCPG) is G3. GTP-binding positions include 81–85 (DCPGH) and 136–139 (NKCD). The interval 136–139 (NKCD) is G4. Residues 174-176 (SAL) form a G5 region.

This sequence belongs to the TRAFAC class translation factor GTPase superfamily. Classic translation factor GTPase family. EF-Tu/EF-1A subfamily. Monomer.

The protein localises to the cytoplasm. The enzyme catalyses GTP + H2O = GDP + phosphate + H(+). In terms of biological role, GTP hydrolase that promotes the GTP-dependent binding of aminoacyl-tRNA to the A-site of ribosomes during protein biosynthesis. The chain is Elongation factor Tu from Buchnera aphidicola subsp. Baizongia pistaciae (strain Bp).